Reading from the N-terminus, the 283-residue chain is Orotidine 5'-phosphate decarboxylase (283 aa).

Lysine 97 acts as the Proton donor in catalysis.

Belongs to the OMP decarboxylase family. Type 2 subfamily.

The enzyme catalyses orotidine 5'-phosphate + H(+) = UMP + CO2. The protein operates within pyrimidine metabolism; UMP biosynthesis via de novo pathway; UMP from orotate: step 2/2. This is Orotidine 5'-phosphate decarboxylase from Clostridium botulinum (strain Loch Maree / Type A3).